A 130-amino-acid polypeptide reads, in one-letter code: Protein ApaG (130 aa).

Residues 3–127 enclose the ApaG domain; sequence STITRDIQIT…FSLDSPFSRQ (125 aa).

This chain is Protein ApaG, found in Beijerinckia indica subsp. indica (strain ATCC 9039 / DSM 1715 / NCIMB 8712).